A 275-amino-acid polypeptide reads, in one-letter code: Dermonecrotic toxin LamSicTox-alphaIV1iii (275 aa).

Histidine 5 is an active-site residue. The Mg(2+) site is built by glutamate 25 and aspartate 27. The active-site Nucleophile is the histidine 41. 2 disulfides stabilise this stretch: cysteine 45–cysteine 51 and cysteine 47–cysteine 192. Position 85 (aspartate 85) interacts with Mg(2+).

The protein belongs to the arthropod phospholipase D family. Class II subfamily. Mg(2+) serves as cofactor. Expressed by the venom gland.

The protein resides in the secreted. The catalysed reaction is an N-(acyl)-sphingosylphosphocholine = an N-(acyl)-sphingosyl-1,3-cyclic phosphate + choline. The enzyme catalyses an N-(acyl)-sphingosylphosphoethanolamine = an N-(acyl)-sphingosyl-1,3-cyclic phosphate + ethanolamine. It carries out the reaction a 1-acyl-sn-glycero-3-phosphocholine = a 1-acyl-sn-glycero-2,3-cyclic phosphate + choline. It catalyses the reaction a 1-acyl-sn-glycero-3-phosphoethanolamine = a 1-acyl-sn-glycero-2,3-cyclic phosphate + ethanolamine. Its function is as follows. Dermonecrotic toxins cleave the phosphodiester linkage between the phosphate and headgroup of certain phospholipids (sphingolipid and lysolipid substrates), forming an alcohol (often choline) and a cyclic phosphate. This toxin acts on sphingomyelin (SM). It may also act on ceramide phosphoethanolamine (CPE), lysophosphatidylcholine (LPC) and lysophosphatidylethanolamine (LPE), but not on lysophosphatidylserine (LPS), and lysophosphatidylglycerol (LPG). It acts by transphosphatidylation, releasing exclusively cyclic phosphate products as second products. Induces dermonecrosis, hemolysis, increased vascular permeability, edema, inflammatory response, and platelet aggregation. In Loxosceles amazonica (Recluse spider), this protein is Dermonecrotic toxin LamSicTox-alphaIV1iii.